A 297-amino-acid chain; its full sequence is CCAAT/enhancer-binding protein beta (297 aa).

Positions 1 to 22 (MHRLLAWDAACLPPPPAAFRPM) are required for Lys-134 sumoylation. Asymmetric dimethylarginine; by CARM1 is present on Arg3. The interval 22–105 (MEVANFYYEP…YGAKPSKKPS (84 aa)) is required for MYC transcriptional repression. An N6-acetyllysine; alternate modification is found at Lys39. Residue Lys39 is modified to N6-methylated lysine; alternate. Residues Lys99 and Lys102 each carry the N6-acetyllysine; by KAT2A and KAT2B modification. Position 103 is an N6-acetyllysine; by KAT2A and KAT2B; alternate (Lys103). Residue Lys103 forms a Glycyl lysine isopeptide (Lys-Gly) (interchain with G-Cter in SUMO2); alternate linkage. The residue at position 105 (Ser105) is a Phosphoserine; by RPS6KA1 and PKC/PRKCA. A Glycyl lysine isopeptide (Lys-Gly) (interchain with G-Cter in SUMO2); alternate cross-link involves residue Lys134. Lys134 is covalently cross-linked (Glycyl lysine isopeptide (Lys-Gly) (interchain with G-Cter in SUMO); alternate). Lys145 participates in a covalent cross-link: Glycyl lysine isopeptide (Lys-Gly) (interchain with G-Cter in SUMO2). The interval 172-201 (SGSSGSLSTSSSSSPPGTPSPADAKAAPAA) is disordered. Residue Thr180 is modified to Phosphothreonine; by GSK3-beta. 2 O-linked (GlcNAc) serine glycosylation sites follow: Ser181 and Ser182. Ser185 carries the post-translational modification Phosphoserine; by GSK3-beta. Thr189 carries the post-translational modification Phosphothreonine; by RPS6KA1, CDK2 and MAPK. Residues Lys212 and Lys214 each participate in a glycyl lysine isopeptide (Lys-Gly) (interchain with G-Cter in SUMO2) cross-link. Residues 223-286 (SDEYKMRRER…STLRNLFKQL (64 aa)) enclose the bZIP domain. The segment at 227–247 (KMRRERNNIAVRKSRDKAKMR) is basic motif. Ser240 is modified (phosphoserine; by PKC/PRKCA). The segment at 249–256 (LETQHKVL) is leucine-zipper. Phosphoserine; by CaMK2 is present on Ser277. Residue Lys284 forms a Glycyl lysine isopeptide (Lys-Gly) (interchain with G-Cter in SUMO2) linkage.

This sequence belongs to the bZIP family. C/EBP subfamily. In terms of assembly, binds DNA as a homodimer and as a heterodimer. Interacts with MYB; within the complex, MYB and CEBPB bind to different promoter regions. Interacts with ATF4. Binds DNA as a heterodimer with ATF4. Can form stable heterodimers with CEBPA, CEBPD, CEBPE and CEBPG. Interacts with SIX1. Isoform 2 and isoform 3 also form heterodimers. Interacts with TRIM28 and PTGES2. Interacts with PRDM16. Interacts with CCDC85B. Forms a complex with THOC5. Interacts with ZNF638; this interaction increases transcriptional activation. Interacts with CIDEA and CIDEC; these interactions increase transcriptional activation of a subset of CEBPB downstream target genes. Interacts with DDIT3/CHOP. Interacts with EP300; recruits EP300 to chromatin. Interacts with RORA; the interaction disrupts interaction with EP300. Interacts (not methylated) with MED23, MED26, SMARCA2, SMARCB1 and SMARCC1. Interacts with KAT2A and KAT2B. Interacts with ATF5; EP300 is required for ATF5 and CEBPB interaction and DNA binding. Interacts with NFE2L1; the heterodimer represses expression of DSPP during odontoblast differentiation. In terms of processing, phosphorylated at Thr-189 by MAPK and CDK2, serves to prime phosphorylation at Thr-180 and Ser-185 by GSK3B and acquire DNA-binding as well as transactivation activities, required to induce adipogenesis. MAPK and CDK2 act sequentially to maintain Thr-189 in the primed phosphorylated state during mitotical cloning expansion and thereby progression of terminal differentiation. Phosphorylation at Ser-105 enhances transactivation activity. Phosphorylation at Ser-277 in response to calcium increases transactivation activity. Phosphorylated at Thr-189 by RPS6KA1. Methylated. Methylation at Arg-3 by CARM1 and at Lys-39 by EHMT2 inhibit transactivation activity. Methylation is probably inhibited by phosphorylation at Thr-189. Post-translationally, sumoylated by polymeric chains of SUMO2 or SUMO3. Sumoylation at Lys-134 is required for inhibition of T-cells proliferation. In adipocytes, sumoylation at Lys-134 by PIAS1 leads to ubiquitination and subsequent proteasomal degradation. Desumoylated by SENP2, which abolishes ubiquitination and stabilizes protein levels. In terms of processing, ubiquitinated, leading to proteasomal degradation. O-glycosylated, glycosylation at Ser-181 and Ser-182 prevents phosphorylation on Thr-189, Ser-185 and Thr-180 and DNA binding activity which delays the adipocyte differentiation program. Post-translationally, acetylated. Acetylation at Lys-39 is an important and dynamic regulatory event that contributes to its ability to transactivate target genes, including those associated with adipogenesis and adipocyte function. Deacetylation by HDAC1 represses its transactivation activity. Acetylated by KAT2A and KAT2B within a cluster of lysine residues between amino acids 99-103, this acetylation is strongly induced by glucocorticoid treatment and enhances transactivation activity. As to expression, liver and lung.

It localises to the nucleus. The protein resides in the cytoplasm. Important transcription factor regulating the expression of genes involved in immune and inflammatory responses. Also plays a significant role in adipogenesis, as well as in the gluconeogenic pathway, liver regeneration, and hematopoiesis. The consensus recognition site is 5'-T[TG]NNGNAA[TG]-3'. Its functional capacity is governed by protein interactions and post-translational protein modifications. During early embryogenesis, plays essential and redundant roles with CEBPA. Has a promitotic effect on many cell types such as hepatocytes and adipocytes but has an antiproliferative effect on T-cells by repressing MYC expression, facilitating differentiation along the T-helper 2 lineage. Binds to regulatory regions of several acute-phase and cytokines genes and plays a role in the regulation of acute-phase reaction and inflammation. Also plays a role in intracellular bacteria killing. During adipogenesis, is rapidly expressed and, after activation by phosphorylation, induces CEBPA and PPARG, which turn on the series of adipocyte genes that give rise to the adipocyte phenotype. The delayed transactivation of the CEBPA and PPARG genes by CEBPB appears necessary to allow mitotic clonal expansion and thereby progression of terminal differentiation. Essential for female reproduction because of a critical role in ovarian follicle development. Restricts osteoclastogenesis: together with NFE2L1; represses expression of DSPP during odontoblast differentiation. Its function is as follows. Essential for gene expression induction in activated macrophages. Plays a major role in immune responses such as CD4(+) T-cell response, granuloma formation and endotoxin shock. Not essential for intracellular bacteria killing. Functionally, acts as a dominant negative through heterodimerization with isoform 2. Promotes osteoblast differentiation and osteoclastogenesis. This Rattus norvegicus (Rat) protein is CCAAT/enhancer-binding protein beta.